The following is a 224-amino-acid chain: Transmembrane protein C16orf54 (224 aa).

The O-linked (GalNAc...) threonine glycan is linked to Thr-4. A helical membrane pass occupies residues Ile-32–Leu-52. Disordered stretches follow at residues Thr-104–Gly-138 and Trp-152–Pro-203. Thr-112 and Thr-116 each carry phosphothreonine. A Phosphoserine modification is found at Ser-194.

O-glycosylated with core 1 or possibly core 8 glycans.

It localises to the membrane. The chain is Transmembrane protein C16orf54 (C16orf54) from Homo sapiens (Human).